Consider the following 358-residue polypeptide: MLATLWLVGLSLPMLWAQRLISCPYKNVCQYALLSGSDVILQCNYPKALWYFSSSLEDKLSLVNSKPDGRVLPGSDLQLSDPKPSQTGLYRCLDNHKARLVEYEIDFQNIALLHITHKDLGQEPMGNESMNLGGKVLVFTRWDPWQDCNRCQKPGERKRLGYCYVEEPQEKPMPCWLYLREEKVTNSRLRPELQLQACQVPCDTATETNQPYFVFDTYLLDKPNSNARLKCPLASIYRPVHWEADNSPLTWQDQLSGQTVSTIMDLHSGGQHLKVFQPATYRCFVEQELIAQFNPTERQSKAQNPWQPRIQPDKADSVLRRLKLMVLSISVLAVGGLLCKVVFRPVCGKKRSQVLLVK.

A signal peptide spans Met-1 to Ala-17. Residues Gln-18–Leu-322 are Extracellular-facing. N-linked (GlcNAc...) asparagine glycosylation is present at Asn-127. Residues Lys-323 to Phe-343 traverse the membrane as a helical segment. The Cytoplasmic segment spans residues Arg-344–Lys-358.

Belongs to the FAM187 family.

The protein resides in the membrane. In Mus musculus (Mouse), this protein is Protein FAM187B (Fam187b).